The chain runs to 341 residues: UDP-N-acetylglucosamine--N-acetylmuramyl-(pentapeptide) pyrophosphoryl-undecaprenol N-acetylglucosamine transferase (341 aa).

UDP-N-acetyl-alpha-D-glucosamine-binding positions include 10 to 12 (TGG), N124, S177, and Q275.

This sequence belongs to the glycosyltransferase 28 family. MurG subfamily.

It localises to the cell inner membrane. The enzyme catalyses di-trans,octa-cis-undecaprenyl diphospho-N-acetyl-alpha-D-muramoyl-L-alanyl-D-glutamyl-meso-2,6-diaminopimeloyl-D-alanyl-D-alanine + UDP-N-acetyl-alpha-D-glucosamine = di-trans,octa-cis-undecaprenyl diphospho-[N-acetyl-alpha-D-glucosaminyl-(1-&gt;4)]-N-acetyl-alpha-D-muramoyl-L-alanyl-D-glutamyl-meso-2,6-diaminopimeloyl-D-alanyl-D-alanine + UDP + H(+). The protein operates within cell wall biogenesis; peptidoglycan biosynthesis. Its function is as follows. Cell wall formation. Catalyzes the transfer of a GlcNAc subunit on undecaprenyl-pyrophosphoryl-MurNAc-pentapeptide (lipid intermediate I) to form undecaprenyl-pyrophosphoryl-MurNAc-(pentapeptide)GlcNAc (lipid intermediate II). This is UDP-N-acetylglucosamine--N-acetylmuramyl-(pentapeptide) pyrophosphoryl-undecaprenol N-acetylglucosamine transferase from Campylobacter hominis (strain ATCC BAA-381 / DSM 21671 / CCUG 45161 / LMG 19568 / NCTC 13146 / CH001A).